The following is a 594-amino-acid chain: Proteasome-associated ATPase (594 aa).

Positions 20–98 (DDLAAQVTYL…KEEIDRLAQP (79 aa)) form a coiled coil. 282-287 (GCGKTL) contributes to the ATP binding site. Positions 593-594 (YL) are docks into pockets in the proteasome alpha-ring.

The protein belongs to the AAA ATPase family. As to quaternary structure, homohexamer. Assembles into a hexameric ring structure that caps the 20S proteasome core. Strongly interacts with the prokaryotic ubiquitin-like protein Pup through a hydrophobic interface; the interacting region of ARC lies in its N-terminal coiled-coil domain. There is one Pup binding site per ARC hexamer ring. Upon ATP-binding, the C-terminus of ARC interacts with the alpha-rings of the proteasome core, possibly by binding to the intersubunit pockets.

Its pathway is protein degradation; proteasomal Pup-dependent pathway. Functionally, ATPase which is responsible for recognizing, binding, unfolding and translocation of pupylated proteins into the bacterial 20S proteasome core particle. May be essential for opening the gate of the 20S proteasome via an interaction with its C-terminus, thereby allowing substrate entry and access to the site of proteolysis. Thus, the C-termini of the proteasomal ATPase may function like a 'key in a lock' to induce gate opening and therefore regulate proteolysis. The chain is Proteasome-associated ATPase from Catenulispora acidiphila (strain DSM 44928 / JCM 14897 / NBRC 102108 / NRRL B-24433 / ID139908).